The chain runs to 401 residues: Nicotinate phosphoribosyltransferase (401 aa).

Histidine 221 is subject to Phosphohistidine; by autocatalysis.

The protein belongs to the NAPRTase family. In terms of processing, transiently phosphorylated on a His residue during the reaction cycle. Phosphorylation strongly increases the affinity for substrates and increases the rate of nicotinate D-ribonucleotide production. Dephosphorylation regenerates the low-affinity form of the enzyme, leading to product release.

The catalysed reaction is nicotinate + 5-phospho-alpha-D-ribose 1-diphosphate + ATP + H2O = nicotinate beta-D-ribonucleotide + ADP + phosphate + diphosphate. Its pathway is cofactor biosynthesis; NAD(+) biosynthesis; nicotinate D-ribonucleotide from nicotinate: step 1/1. Functionally, catalyzes the synthesis of beta-nicotinate D-ribonucleotide from nicotinate and 5-phospho-D-ribose 1-phosphate at the expense of ATP. The protein is Nicotinate phosphoribosyltransferase of Erwinia tasmaniensis (strain DSM 17950 / CFBP 7177 / CIP 109463 / NCPPB 4357 / Et1/99).